A 562-amino-acid polypeptide reads, in one-letter code: Arylsulfatase H (562 aa).

3 residues coordinate Ca(2+): Asp15, Asp16, and Cys55. Cys55 serves as the catalytic Nucleophile. At Cys55 the chain carries 3-oxoalanine (Cys). Lys115 is a binding site for substrate. His117 is a catalytic residue. A run of 2 helical transmembrane segments spans residues 167–187 (LWIS…PKYA) and 189–209 (WFVV…LFFI). His271 serves as a coordination point for substrate. Asp323 and Asn324 together coordinate Ca(2+).

It belongs to the sulfatase family. Requires Ca(2+) as cofactor. The conversion to 3-oxoalanine (also known as C-formylglycine, FGly), of a serine or cysteine residue in prokaryotes and of a cysteine residue in eukaryotes, is critical for catalytic activity.

It localises to the membrane. The polypeptide is Arylsulfatase H (ARSH) (Canis lupus familiaris (Dog)).